A 466-amino-acid polypeptide reads, in one-letter code: Asparagine--tRNA ligase (466 aa).

Belongs to the class-II aminoacyl-tRNA synthetase family. Homodimer.

Its subcellular location is the cytoplasm. It catalyses the reaction tRNA(Asn) + L-asparagine + ATP = L-asparaginyl-tRNA(Asn) + AMP + diphosphate + H(+). This is Asparagine--tRNA ligase from Shewanella baltica (strain OS195).